We begin with the raw amino-acid sequence, 348 residues long: Dihydroorotate dehydrogenase (quinone) (348 aa).

FMN-binding positions include 65–69 and threonine 89; that span reads AGLDK. Lysine 69 is a substrate binding site. 114 to 118 is a substrate binding site; the sequence is NRLGF. Residues asparagine 147 and asparagine 180 each contribute to the FMN site. Asparagine 180 provides a ligand contact to substrate. Catalysis depends on serine 183, which acts as the Nucleophile. Asparagine 185 is a binding site for substrate. The FMN site is built by lysine 225 and threonine 253. 254-255 is a substrate binding site; sequence NT. FMN contacts are provided by residues glycine 276, glycine 305, and 326-327; that span reads YS.

It belongs to the dihydroorotate dehydrogenase family. Type 2 subfamily. Monomer. The cofactor is FMN.

It localises to the cell membrane. The catalysed reaction is (S)-dihydroorotate + a quinone = orotate + a quinol. The protein operates within pyrimidine metabolism; UMP biosynthesis via de novo pathway; orotate from (S)-dihydroorotate (quinone route): step 1/1. Its function is as follows. Catalyzes the conversion of dihydroorotate to orotate with quinone as electron acceptor. This is Dihydroorotate dehydrogenase (quinone) from Delftia acidovorans (strain DSM 14801 / SPH-1).